A 107-amino-acid polypeptide reads, in one-letter code: MNVIEKIERQIKDNIILIYMKGTPQSPSCGFSAQAVQALSICGEKFAYVDILENLDIRKELPRYANWPTFPQLWIKGELIGGCSIILEMLENGELKKIISNAVLNSK.

In terms of domain architecture, Glutaredoxin spans 4 to 106 (IEKIERQIKD…KIISNAVLNS (103 aa)). Residue K21 participates in glutathione binding. C29 lines the [2Fe-2S] cluster pocket. Residues R58, F70, and 83–84 (CS) each bind glutathione.

Belongs to the glutaredoxin family. Monothiol subfamily. In terms of assembly, homodimer.

The protein localises to the cytoplasm. Functionally, monothiol glutaredoxin involved in the biogenesis of iron-sulfur clusters. This is Glutaredoxin 4 (grxD) from Buchnera aphidicola subsp. Schizaphis graminum (strain Sg).